Reading from the N-terminus, the 142-residue chain is Hemoglobin subunit alpha (142 aa).

Residues 2-142 enclose the Globin domain; sequence VLSPTDKSNV…VSTVLTSKYR (141 aa). The residue at position 4 (S4) is a Phosphoserine. K8 and K12 each carry N6-succinyllysine. K17 carries the N6-acetyllysine; alternate modification. K17 is subject to N6-succinyllysine; alternate. Y25 carries the phosphotyrosine modification. At K41 the chain carries N6-succinyllysine. H59 serves as a coordination point for O2. Residue H88 participates in heme b binding. At S103 the chain carries Phosphoserine. Residue T109 is modified to Phosphothreonine. Residues S125 and S132 each carry the phosphoserine modification. A phosphothreonine mark is found at T135 and T138. S139 is modified (phosphoserine).

The protein belongs to the globin family. In terms of assembly, heterotetramer of two alpha chains and two beta chains. In terms of tissue distribution, red blood cells.

Involved in oxygen transport from the lung to the various peripheral tissues. Its function is as follows. Hemopressin acts as an antagonist peptide of the cannabinoid receptor CNR1. Hemopressin-binding efficiently blocks cannabinoid receptor CNR1 and subsequent signaling. This chain is Hemoglobin subunit alpha (HBA), found in Balaenoptera acutorostrata (Common minke whale).